Reading from the N-terminus, the 232-residue chain is Large ribosomal subunit protein uL1 (232 aa).

The protein belongs to the universal ribosomal protein uL1 family. Part of the 50S ribosomal subunit.

In terms of biological role, binds directly to 23S rRNA. The L1 stalk is quite mobile in the ribosome, and is involved in E site tRNA release. Functionally, protein L1 is also a translational repressor protein, it controls the translation of the L11 operon by binding to its mRNA. The protein is Large ribosomal subunit protein uL1 of Alkaliphilus oremlandii (strain OhILAs) (Clostridium oremlandii (strain OhILAs)).